A 365-amino-acid polypeptide reads, in one-letter code: tRNA 2-selenouridine synthase (365 aa).

The Rhodanese domain occupies 15 to 138 (LVSDHPIMDA…MRQFLIETID (124 aa)). The active-site S-selanylcysteine intermediate is the Cys-98.

It belongs to the SelU family. In terms of assembly, monomer.

It catalyses the reaction 5-methylaminomethyl-2-thiouridine(34) in tRNA + selenophosphate + (2E)-geranyl diphosphate + H2O + H(+) = 5-methylaminomethyl-2-selenouridine(34) in tRNA + (2E)-thiogeraniol + phosphate + diphosphate. The catalysed reaction is 5-methylaminomethyl-2-thiouridine(34) in tRNA + (2E)-geranyl diphosphate = 5-methylaminomethyl-S-(2E)-geranyl-thiouridine(34) in tRNA + diphosphate. The enzyme catalyses 5-methylaminomethyl-S-(2E)-geranyl-thiouridine(34) in tRNA + selenophosphate + H(+) = 5-methylaminomethyl-2-(Se-phospho)selenouridine(34) in tRNA + (2E)-thiogeraniol. It carries out the reaction 5-methylaminomethyl-2-(Se-phospho)selenouridine(34) in tRNA + H2O = 5-methylaminomethyl-2-selenouridine(34) in tRNA + phosphate. In terms of biological role, involved in the post-transcriptional modification of the uridine at the wobble position (U34) of tRNA(Lys), tRNA(Glu) and tRNA(Gln). Catalyzes the conversion of 2-thiouridine (S2U-RNA) to 2-selenouridine (Se2U-RNA). Acts in a two-step process involving geranylation of 2-thiouridine (S2U) to S-geranyl-2-thiouridine (geS2U) and subsequent selenation of the latter derivative to 2-selenouridine (Se2U) in the tRNA chain. In Shewanella piezotolerans (strain WP3 / JCM 13877), this protein is tRNA 2-selenouridine synthase.